The chain runs to 237 residues: 7-carboxy-7-deazaguanine synthase (237 aa).

Residues 15–17 and Arg-30 contribute to the substrate site; that span reads LSG. In terms of domain architecture, Radical SAM core spans 21–233; sequence STGIPTIFVR…IQTHKYIWGD (213 aa). [4Fe-4S] cluster contacts are provided by Cys-34, Cys-38, and Cys-48. Thr-50 serves as a coordination point for Mg(2+). Substrate is bound at residue Thr-84. Residue Gly-86 coordinates S-adenosyl-L-methionine.

This sequence belongs to the radical SAM superfamily. 7-carboxy-7-deazaguanine synthase family. As to quaternary structure, homodimer. The cofactor is [4Fe-4S] cluster. S-adenosyl-L-methionine is required as a cofactor. Requires Mg(2+) as cofactor.

It carries out the reaction 6-carboxy-5,6,7,8-tetrahydropterin + H(+) = 7-carboxy-7-deazaguanine + NH4(+). It participates in purine metabolism; 7-cyano-7-deazaguanine biosynthesis. In terms of biological role, catalyzes the complex heterocyclic radical-mediated conversion of 6-carboxy-5,6,7,8-tetrahydropterin (CPH4) to 7-carboxy-7-deazaguanine (CDG), a step common to the biosynthetic pathways of all 7-deazapurine-containing compounds. The polypeptide is 7-carboxy-7-deazaguanine synthase (Leptospira interrogans serogroup Icterohaemorrhagiae serovar Lai (strain 56601)).